The chain runs to 723 residues: 1,3-beta-galactosyl-N-acetylhexosamine phosphorylase Cphy0577 (723 aa).

Asp317 (proton donor) is an active-site residue.

The protein belongs to the glycoside hydrolase 112 family.

It catalyses the reaction beta-D-galactosyl-(1-&gt;3)-N-acetyl-D-glucosamine + phosphate = alpha-D-galactose 1-phosphate + N-acetyl-D-glucosamine. Reversibly phosphorolyzes beta-D-galactopyranosyl-(1-&gt;3)-N-acetyl-D-glucosamine to form alpha-D-galactopyranose 1-phosphate and acetyl-D-glucosamine. Active towards galacto-N-biose and lacto-N-biose. Does not phosphorolyze galacto-N-tetraose or lacto-N-tetraose. In the reverse reaction has activity toward N-acetyl-D-glucosamine and N-acetyl-D-galactosamine, but not L-rhamnose, D-glucose or D-galactose. This chain is 1,3-beta-galactosyl-N-acetylhexosamine phosphorylase Cphy0577, found in Lachnoclostridium phytofermentans (strain ATCC 700394 / DSM 18823 / ISDg) (Clostridium phytofermentans).